Here is a 212-residue protein sequence, read N- to C-terminus: Peptidyl-prolyl cis-trans isomerase-like 3 (212 aa).

The PPIase cyclophilin-type domain occupies 1–198 (MSVTLHTTHG…EGEEGGYEAI (198 aa)).

It belongs to the cyclophilin-type PPIase family. PPIL3 subfamily.

It carries out the reaction [protein]-peptidylproline (omega=180) = [protein]-peptidylproline (omega=0). Its function is as follows. PPIases accelerate the folding of proteins. It catalyzes the cis-trans isomerization of proline imidic peptide bonds in oligopeptides. This Aspergillus fumigatus (strain ATCC MYA-4609 / CBS 101355 / FGSC A1100 / Af293) (Neosartorya fumigata) protein is Peptidyl-prolyl cis-trans isomerase-like 3 (cyp10).